The following is a 72-amino-acid chain: Protein SlyX homolog (72 aa).

It belongs to the SlyX family.

In Vibrio cholerae serotype O1 (strain ATCC 39541 / Classical Ogawa 395 / O395), this protein is Protein SlyX homolog.